A 381-amino-acid polypeptide reads, in one-letter code: Cytochrome P450 105C1 (381 aa).

Heme is bound at residue Cys330.

It belongs to the cytochrome P450 family. Heme is required as a cofactor.

Its subcellular location is the cytoplasm. The protein is Cytochrome P450 105C1 (cyp105C1) of Streptomyces sp.